Here is a 500-residue protein sequence, read N- to C-terminus: NAD(P)H-quinone oxidoreductase chain 4, chloroplastic (500 aa).

Helical transmembrane passes span 4 to 24 (FPWLTIIVVLPIFAGSSIFFL), 37 to 57 (ICICLLELLLTTYTFCYHFQL), 84 to 104 (GLSIGPILLTGFITTLATLAA), 111 to 129 (SRLFHFLMLAMYSGQIGSF), 134 to 154 (LLLFFIMWELELIPVYLLLSM), 167 to 187 (FILYTAGGSIFLLMGIPGMGL), 208 to 228 (ALEILFYFGFLIAYAVKSPII), 242 to 262 (HYSTCMLLAGILLKMGAYGLV), 272 to 292 (AHSIFSPWLMIVGTIQVIYAA), 305 to 325 (IAYSSVSHMAFIIIGIGSITD), 330 to 350 (GAILQIISHGFIGAALFFLAG), 374 to 396 (IFTMFSSFSMASLALPGMSGFVA), 411 to 431 (FFMPKILITFVMAIGMILTPI), and 462 to 482 (LFVSICIFLPVIGIGIYPDFV).

This sequence belongs to the complex I subunit 4 family.

It localises to the plastid. Its subcellular location is the chloroplast thylakoid membrane. It catalyses the reaction a plastoquinone + NADH + (n+1) H(+)(in) = a plastoquinol + NAD(+) + n H(+)(out). It carries out the reaction a plastoquinone + NADPH + (n+1) H(+)(in) = a plastoquinol + NADP(+) + n H(+)(out). The sequence is that of NAD(P)H-quinone oxidoreductase chain 4, chloroplastic from Chloranthus spicatus (Chulantree).